A 240-amino-acid chain; its full sequence is Ribonuclease PH (240 aa).

Phosphate is bound by residues Arg-87 and 125–127 (GTR).

Belongs to the RNase PH family. As to quaternary structure, homohexameric ring arranged as a trimer of dimers.

It catalyses the reaction tRNA(n+1) + phosphate = tRNA(n) + a ribonucleoside 5'-diphosphate. Functionally, phosphorolytic 3'-5' exoribonuclease that plays an important role in tRNA 3'-end maturation. Removes nucleotide residues following the 3'-CCA terminus of tRNAs; can also add nucleotides to the ends of RNA molecules by using nucleoside diphosphates as substrates, but this may not be physiologically important. Probably plays a role in initiation of 16S rRNA degradation (leading to ribosome degradation) during starvation. The chain is Ribonuclease PH from Ruminiclostridium cellulolyticum (strain ATCC 35319 / DSM 5812 / JCM 6584 / H10) (Clostridium cellulolyticum).